We begin with the raw amino-acid sequence, 154 residues long: Iron-sulfur cluster assembly 2 homolog, mitochondrial (154 aa).

Residues 1 to 8 constitute a mitochondrion transit peptide; it reads MAAAWGSS. Residues 29–49 are disordered; the sequence is SLGPQARREASSSSPEAGEGQ. The segment covering 39–49 has biased composition (low complexity); that stretch reads SSSSPEAGEGQ. Residues Cys-79, Cys-144, and Cys-146 each contribute to the Fe cation site.

This sequence belongs to the HesB/IscA family. Heterotetramer; forms a dimer of dimers with IBA57. Interacts with [2Fe-2S]-ISCA2 forming the heterodimer [2Fe- 2S]-ISCA2-IBA57 complex; [2Fe-2S] cluster binding is absolutely required to promote the complex formation.

The protein localises to the mitochondrion. Functionally, involved in the maturation of mitochondrial 4Fe-4S proteins functioning late in the iron-sulfur cluster assembly pathway. May be involved in the binding of an intermediate of Fe/S cluster assembly. This Homo sapiens (Human) protein is Iron-sulfur cluster assembly 2 homolog, mitochondrial (ISCA2).